The following is a 276-amino-acid chain: MAAGFKTVEPLEYYRRFLKENCRPDGRELGEFRTTTVNIGSISTADGSALVKLGNTTVICGVKAEFAAPSTDAPDKGYVVPNVDLPPLCSSRFRSGPPGEEAQVASQFIADVIENSQIIQKEDLCISPGKLVWVLYCDLICLDYDGNILDACTFALLAALKNVQLPEVTINEETALAEVNLKKKSYLNIRTHPVATSFAVFDDTLLIVDPTGEEEHLATGTLTIVMDEEGKLCCLHKPGGSGLTGAKLQDCMSRAVTRHKEVKKLMDEVIKSMKPK.

The residue at position 2 (A2) is an N-acetylalanine.

Belongs to the RNase PH family. Component of the RNA exosome core complex (Exo-9), composed of EXOSC1, EXOSC2, EXOSC3, EXOSC4, EXOSC5, EXOSC6, EXOSC7, EXOSC8 and EXOSC9; within the complex interacts with EXOSC5 and EXOSC6. The catalytically inactive RNA exosome core complex (Exo-9) associates with the catalytic subunit EXOSC10/RRP6. Exo-9 may associate with DIS3 to form the nucleolar exosome complex, or DIS3L to form the cytoplasmic exosome complex. Exo-9 is formed by a hexameric base ring consisting of the heterodimers EXOSC4-EXOSC9, EXOSC5-EXOSC8 and EXOSC6-EXOSC7, and a cap ring consisting of EXOSC1, EXOSC2 and EXOSC3. The RNA exosome complex associates with cofactors C1D/RRP47, MPHOSPH6/MPP6 and MTREX/MTR4. Binds outer membrane protein opap from Neisseria gonorrhoeae.

It is found in the cytoplasm. The protein localises to the nucleus. It localises to the nucleolus. Its function is as follows. Non-catalytic component of the RNA exosome complex which has 3'-&gt;5' exoribonuclease activity and participates in a multitude of cellular RNA processing and degradation events. In the nucleus, the RNA exosome complex is involved in proper maturation of stable RNA species such as rRNA, snRNA and snoRNA, in the elimination of RNA processing by-products and non-coding 'pervasive' transcripts, such as antisense RNA species and promoter-upstream transcripts (PROMPTs), and of mRNAs with processing defects, thereby limiting or excluding their export to the cytoplasm. The RNA exosome may be involved in Ig class switch recombination (CSR) and/or Ig variable region somatic hypermutation (SHM) by targeting AICDA deamination activity to transcribed dsDNA substrates. In the cytoplasm, the RNA exosome complex is involved in general mRNA turnover and specifically degrades inherently unstable mRNAs containing AU-rich elements (AREs) within their 3' untranslated regions, and in RNA surveillance pathways, preventing translation of aberrant mRNAs. It seems to be involved in degradation of histone mRNA. The catalytic inactive RNA exosome core complex of 9 subunits (Exo-9) is proposed to play a pivotal role in the binding and presentation of RNA for ribonucleolysis, and to serve as a scaffold for the association with catalytic subunits and accessory proteins or complexes. EXOSC8 binds to ARE-containing RNAs. The protein is Exosome complex component RRP43 (EXOSC8) of Homo sapiens (Human).